The following is a 446-amino-acid chain: Mitochondrial distribution and morphology protein 12 (446 aa).

Residues 1–446 (MSIDINWEAA…VYPSFWTFLV (446 aa)) enclose the SMP-LTD domain. A compositionally biased stretch (acidic residues) spans 75–85 (DNEIGDGEVSD). Disordered regions lie at residues 75 to 106 (DNEIGDGEVSDIQDRSPKPRPSSAGNERSAAD), 126 to 145 (PHDVPIPSKEDPLASRPIRS), and 188 to 283 (TPLS…RVRE). The segment covering 126–138 (PHDVPIPSKEDPL) has biased composition (basic and acidic residues). Positions 233–246 (TGNSRPSTADTLDS) are enriched in polar residues. Basic and acidic residues predominate over residues 260–274 (SSDDAHPNVLPRRDN).

This sequence belongs to the MDM12 family. In terms of assembly, component of the ER-mitochondria encounter structure (ERMES) or MDM complex, composed of MMM1, MDM10, MDM12 and MDM34. An MMM1 homodimer associates with one molecule of MDM12 on each side in a pairwise head-to-tail manner, and the SMP-LTD domains of MMM1 and MDM12 generate a continuous hydrophobic tunnel for phospholipid trafficking.

The protein localises to the mitochondrion outer membrane. It localises to the endoplasmic reticulum membrane. Functionally, component of the ERMES/MDM complex, which serves as a molecular tether to connect the endoplasmic reticulum (ER) and mitochondria. Components of this complex are involved in the control of mitochondrial shape and protein biogenesis, and function in nonvesicular lipid trafficking between the ER and mitochondria. MDM12 is required for the interaction of the ER-resident membrane protein MMM1 and the outer mitochondrial membrane-resident beta-barrel protein MDM10. The MDM12-MMM1 subcomplex functions in the major beta-barrel assembly pathway that is responsible for biogenesis of all mitochondrial outer membrane beta-barrel proteins, and acts in a late step after the SAM complex. The MDM10-MDM12-MMM1 subcomplex further acts in the TOM40-specific pathway after the action of the MDM12-MMM1 complex. Essential for establishing and maintaining the structure of mitochondria and maintenance of mtDNA nucleoids. The chain is Mitochondrial distribution and morphology protein 12 from Coccidioides immitis (strain RS) (Valley fever fungus).